The chain runs to 302 residues: Exodeoxyribonuclease (302 aa).

It carries out the reaction Exonucleolytic cleavage in the 5'- to 3'-direction to yield nucleoside 5'-phosphates.. Functionally, this enzyme is essential for phage DNA replication; it is believed to function in the removal of DNA-linked RNA primers. It is also necessary for host DNA degradation and phage genetic recombination. The protein is Exodeoxyribonuclease (6) of Enterobacteria phage T3 (Bacteriophage T3).